The chain runs to 202 residues: LexA repressor (202 aa).

A DNA-binding region (H-T-H motif) is located at residues 28–48 (RAEIAQRLGFRSPNAAEEHLK). Active-site for autocatalytic cleavage activity residues include S119 and K156.

The protein belongs to the peptidase S24 family. In terms of assembly, homodimer.

The enzyme catalyses Hydrolysis of Ala-|-Gly bond in repressor LexA.. Represses a number of genes involved in the response to DNA damage (SOS response), including recA and lexA. Binds to the 16 bp palindromic sequence 5'-CTGTATATATATACAG-3'. In the presence of single-stranded DNA, RecA interacts with LexA causing an autocatalytic cleavage which disrupts the DNA-binding part of LexA, leading to derepression of the SOS regulon and eventually DNA repair. In Yersinia pseudotuberculosis serotype O:1b (strain IP 31758), this protein is LexA repressor.